A 232-amino-acid chain; its full sequence is Large ribosomal subunit protein uL1 (232 aa).

This sequence belongs to the universal ribosomal protein uL1 family. As to quaternary structure, part of the 50S ribosomal subunit.

In terms of biological role, binds directly to 23S rRNA. The L1 stalk is quite mobile in the ribosome, and is involved in E site tRNA release. Functionally, protein L1 is also a translational repressor protein, it controls the translation of the L11 operon by binding to its mRNA. This Sinorhizobium medicae (strain WSM419) (Ensifer medicae) protein is Large ribosomal subunit protein uL1.